Here is a 642-residue protein sequence, read N- to C-terminus: Kinesin-like protein KIF12 (642 aa).

Residues 1–13 (MEERGSPDGDPAR) are compositionally biased toward basic and acidic residues. The tract at residues 1-25 (MEERGSPDGDPARNLEQGPEGSETP) is disordered. Residue S6 is modified to Phosphoserine. A Kinesin motor domain is found at 25–360 (PIQVVLRVRP…LRYASRAQRI (336 aa)). 104–111 (GQTGSGKT) contacts ATP. At S369 the chain carries Phosphoserine. Residues 376–465 (QQVENELLRL…QVHDLERRLL (90 aa)) adopt a coiled-coil conformation. 2 disordered regions span residues 531–561 (GHIS…SQSD) and 579–642 (PSAP…LSSC). The span at 538–548 (WPPPWAPPPSP) shows a compositional bias: pro residues. The segment covering 610 to 642 (TLTQQINSSLHLSQRQPQPSEDTQSPGQGLSSC) has biased composition (polar residues). S634 carries the post-translational modification Phosphoserine.

The protein belongs to the TRAFAC class myosin-kinesin ATPase superfamily. Kinesin family. In terms of tissue distribution, expressed in the liver.

The protein localises to the cytoplasm. It localises to the cytoskeleton. This chain is Kinesin-like protein KIF12 (Kif12), found in Mus musculus (Mouse).